Reading from the N-terminus, the 283-residue chain is MQIIDGKSVSAKVKEYVKNEAISLKKSGITPTLAVILVGEDKASQTYVASKEKACLACEMGSVMHRLSKETSQSELLALIEVLNLDDSIDGILVQLPLPKHIDTNRVLEAIDPTKDVDGFHAVNVGKLSSGLDGFVPCTPLGIMELLKEYDVNLQGIDAVVIGRSNIVGKPMASLLLNAGATISIAHSKTKNLPEITRRAKLVVVAVGRPNFLNADMVSDGAIVIDVGINRLDSGKLVGDVDFDSVAPKCSLITPVPGGVGPMTIAMLLSNTLKSAKNRKRNV.

NADP(+) contacts are provided by residues 163–165 (GRS), serine 188, and isoleucine 229.

This sequence belongs to the tetrahydrofolate dehydrogenase/cyclohydrolase family. In terms of assembly, homodimer.

It catalyses the reaction (6R)-5,10-methylene-5,6,7,8-tetrahydrofolate + NADP(+) = (6R)-5,10-methenyltetrahydrofolate + NADPH. The enzyme catalyses (6R)-5,10-methenyltetrahydrofolate + H2O = (6R)-10-formyltetrahydrofolate + H(+). It functions in the pathway one-carbon metabolism; tetrahydrofolate interconversion. Its function is as follows. Catalyzes the oxidation of 5,10-methylenetetrahydrofolate to 5,10-methenyltetrahydrofolate and then the hydrolysis of 5,10-methenyltetrahydrofolate to 10-formyltetrahydrofolate. This is Bifunctional protein FolD from Campylobacter fetus subsp. fetus (strain 82-40).